The following is a 2062-amino-acid chain: Ankyrin repeat domain-containing protein 12 (2062 aa).

Disordered regions lie at residues 1 to 119 and 145 to 188; these read MPKS…GNKK and ARDN…GETP. Over residues 9 to 20 the composition is skewed to polar residues; the sequence is PIQSENSDSDSN. 2 stretches are compositionally biased toward basic and acidic residues: residues 41 to 57 and 100 to 117; these read PKIERSDVSKEMKEKSS and YSEKEGPEKKKTKKEAGN. The segment covering 145–172 has biased composition (polar residues); sequence ARDNSPDSTPNHPSQTTPAQKKTPSSSS. The residue at position 149 (serine 149) is a Phosphoserine. The span at 173–187 shows a compositional bias: basic and acidic residues; sequence RQKDKVNKRNERGET. ANK repeat units follow at residues 184 to 213, 217 to 246, and 250 to 280; these read RGETPLHMAAIRGDVKQVKELISLGANVNV, AGWTPLHEACNVGYYDVAKILIAAGADVNT, and DDDTPLHDSASSGHRDIVKLLLRHGGNPFQA. Disordered stretches follow at residues 301-338, 409-501, 538-577, 609-683, 727-788, 812-1073, 1097-1227, and 1328-1350; these read KREVPLSDDDESYTDSEEAQSVNPSSVDENIDSETEKD, KSFK…TRIT, ISTGKSPKHSCGLSEKQSTPLKQEHTKTCLSPGSSEMSLQ, QKDF…DSAK, EKNI…FTSL, EKHI…LVND, KHKE…RPPV, and EESNQGSLLTVPGDTSPSPKPEV. Residues 306–318 show a composition bias toward acidic residues; the sequence is LSDDDESYTDSEE. Polar residues-rich tracts occupy residues 319 to 328 and 437 to 454; these read AQSVNPSSVD and KKISTSCSVIPETSNSDM. Over residues 455–467 the composition is skewed to basic and acidic residues; that stretch reads QTKKEYVVSGEHK. Basic residues predominate over residues 468-480; it reads QKGKVKRKLKNQN. A compositionally biased stretch (basic and acidic residues) spans 481–498; it reads KNKENQELKQEKEGKENT. Position 543 is a phosphoserine (serine 543). Residues 565-575 show a composition bias toward polar residues; sequence TCLSPGSSEMS. 8 stretches are compositionally biased toward basic and acidic residues: residues 609–631, 639–649, 658–683, 727–784, 812–969, 977–1037, 1061–1072, and 1103–1157; these read QKDFHLEFGEKSNAKIKDEDHSP, TLKKMDKEGKT, KEREKEKHKKEIEGEKEKYKTKDSAK, EKNI…KDSE, EKHI…DKES, HIQE…KDKI, KDTRPKEKRLVN, and KQKE…KQPK. A Phosphoserine modification is found at serine 630. Serine 861 carries the post-translational modification Phosphoserine. Residues 1161 to 1189 show a composition bias toward polar residues; the sequence is SNRSQSVDTKNVMTLGKSSFVSDNSLNRS. The span at 1200–1213 shows a compositional bias: low complexity; that stretch reads SSRSVSMISVASSE. Over residues 1328-1344 the composition is skewed to polar residues; that stretch reads EESNQGSLLTVPGDTSP. A Phosphoserine modification is found at serine 1401. Disordered regions lie at residues 1721–1744 and 1756–1795; these read NAEDDKTENQIPQRMTRNKANTMA and LLSEKDSESSSPRGRIRLTEDDDPQIHHPRKRKVSRVPQP. The span at 1729–1744 shows a compositional bias: polar residues; the sequence is NQIPQRMTRNKANTMA.

In terms of assembly, interacts with the PAS region of the p160 coactivators.

It is found in the nucleus. Functionally, may recruit HDACs to the p160 coactivators/nuclear receptor complex to inhibit ligand-dependent transactivation. This is Ankyrin repeat domain-containing protein 12 (ANKRD12) from Homo sapiens (Human).